A 328-amino-acid polypeptide reads, in one-letter code: Putative potassium channel protein YugO (328 aa).

The next 3 helical transmembrane spans lie at 19–39, 42–62, and 73–93; these read IGVIILCLILLFGQIIYILEP, FTSVFEGIWWAVVTVSTVGYG, and AAGILLILSGASFVTAYFATL. Residues 114–238 enclose the RCK N-terminal domain; that stretch reads RDHIILIGWN…ERAGANQIIG (125 aa).

It localises to the cell membrane. This chain is Putative potassium channel protein YugO (yugO), found in Bacillus subtilis (strain 168).